Reading from the N-terminus, the 65-residue chain is Large ribosomal subunit protein bL35 (65 aa).

The protein belongs to the bacterial ribosomal protein bL35 family.

The polypeptide is Large ribosomal subunit protein bL35 (Rubrobacter xylanophilus (strain DSM 9941 / JCM 11954 / NBRC 16129 / PRD-1)).